A 197-amino-acid chain; its full sequence is Recombination protein RecR (197 aa).

The C4-type zinc-finger motif lies at 56–71; the sequence is CRLCNNFSEAEVCEVC. The Toprim domain maps to 79–174; that stretch reads RQLAVVEMPA…KVSRLARGVP (96 aa).

Belongs to the RecR family.

Its function is as follows. May play a role in DNA repair. It seems to be involved in an RecBC-independent recombinational process of DNA repair. It may act with RecF and RecO. This is Recombination protein RecR from Thiobacillus denitrificans (strain ATCC 25259 / T1).